Reading from the N-terminus, the 279-residue chain is tRNA uridine(34) hydroxylase (279 aa).

The Rhodanese domain maps to 126 to 221 (TKPGMHVIDT…YLQSVKGADS (96 aa)). C181 acts as the Cysteine persulfide intermediate in catalysis.

This sequence belongs to the TrhO family.

It catalyses the reaction uridine(34) in tRNA + AH2 + O2 = 5-hydroxyuridine(34) in tRNA + A + H2O. Functionally, catalyzes oxygen-dependent 5-hydroxyuridine (ho5U) modification at position 34 in tRNAs. The sequence is that of tRNA uridine(34) hydroxylase from Anaplasma phagocytophilum (strain HZ).